Here is a 160-residue protein sequence, read N- to C-terminus: Major pollen allergen Car b 1 isoforms 1A and 1B (160 aa).

The protein belongs to the BetVI family.

The sequence is that of Major pollen allergen Car b 1 isoforms 1A and 1B from Carpinus betulus (European hornbeam).